A 2523-amino-acid polypeptide reads, in one-letter code: Non-reducing polyketide synthase Preu3 (2523 aa).

The tract at residues 58-247 (LQSLASERRA…KILAMTGSFH (190 aa)) is N-terminal acylcarrier protein transacylase domain (SAT). One can recognise a Ketosynthase family 3 (KS3) domain in the interval 373–792 (DNAVAVVGMA…GSNGAMIVCQ (420 aa)). Residues Cys539, His674, and His715 each act as for beta-ketoacyl synthase activity in the active site. Residues 900–1207 (CFGGQVKAFV…KAFGSLADAT (308 aa)) are malonyl-CoA:ACP transacylase (MAT) domain. The For acyl/malonyl transferase activity role is filled by Ser986. The segment at 1271–1398 (HELLTFSSFE…GLVAFGGTVE (128 aa)) is N-terminal hotdog fold. In terms of domain architecture, PKS/mFAS DH spans 1271-1573 (HELLTFSSFE…FTRVTVPGLR (303 aa)). A product template (PT) domain region spans residues 1301-1568 (LVKGHAVVAQ…ALGCRFTRVT (268 aa)). Catalysis depends on His1305, which acts as the Proton acceptor; for dehydratase activity. The C-terminal hotdog fold stretch occupies residues 1421–1573 (ECDALRGSAT…FTRVTVPGLR (153 aa)). The active-site Proton donor; for dehydratase activity is Asp1483. The interval 1579–1601 (ANGDARAQERPSGSRISPSPLAP) is disordered. Residues 1639–1713 (VDYLAQVKAL…KLAEYLAKTL (75 aa)) form the Carrier domain. O-(pantetheine 4'-phosphoryl)serine is present on Ser1673. Positions 1735–1757 (DAEQSSDESPYDSTDDSASGYGD) are disordered. A compositionally biased stretch (acidic residues) spans 1738–1749 (QSSDESPYDSTD). Residues 1986–2085 (LEIGGGTGGT…MRQLLSSEGF (100 aa)) are methyltransferase (CMeT) domain. Positions 2218-2520 (LILHGGGHVL…RALEWLVEQC (303 aa)) are thioesterase (TE) domain.

Requires pantetheine 4'-phosphate as cofactor.

It carries out the reaction 3 malonyl-CoA + acetyl-CoA + S-adenosyl-L-methionine + H(+) = 3-methylorsellinate + S-adenosyl-L-homocysteine + 3 CO2 + 4 CoA. Its function is as follows. Non-reducing polyketide synthase; part of a gene cluster that mediates the biosynthesis of a yet unidentified natural product. The first step in the pathway is performed by Preu3 that condenses one acetyl-CoA starter unit with 3 malonyl-CoA units. Preu3 also catalyzes one methylation step to produce 3-methylorsellinate, an intermediate that exhibits significant antibacterial activities against methicillin-resistant Staphylococcus aureus, multidrug-resistant Enterococcus faecalis, multidrug-resistant Enterococcus faecium, and multidrug-resistant Staphylococcus epidermidis. This chain is Non-reducing polyketide synthase Preu3, found in Preussia isomera (Coprophilous fungus).